Reading from the N-terminus, the 298-residue chain is MKDLFRRAPKRFTAARIENQAIPDNMWVKCPSCGDLIYTRQFSDNLKVCKCGYHMRLAAREWLGLLDDGSFVEFDAALAPVDALEFISPRHVYAHKLSESQEQTGLNDALITGSGAIEGMPLCVAVTEFEFIGGSMGGAFGERLARIIEQAADARVPLLTINASGGARQEEGTLALLQMAKVNMALTRLAAVGQPHIAVLVDPCYGGVLASYTSVADIIIAEPGARIGFAGRRVIEQTIRQKLPAHFQTAEFLLSHGMIDMVTPRGELRSVLATLLRLFHNAPERAADVQNAPALARA.

A CoA carboxyltransferase N-terminal domain is found at 26–294 (MWVKCPSCGD…RAADVQNAPA (269 aa)). Zn(2+)-binding residues include cysteine 30, cysteine 33, cysteine 49, and cysteine 51. The C4-type zinc-finger motif lies at 30–51 (CPSCGDLIYTRQFSDNLKVCKC).

It belongs to the AccD/PCCB family. As to quaternary structure, acetyl-CoA carboxylase is a heterohexamer composed of biotin carboxyl carrier protein (AccB), biotin carboxylase (AccC) and two subunits each of ACCase subunit alpha (AccA) and ACCase subunit beta (AccD). It depends on Zn(2+) as a cofactor.

It localises to the cytoplasm. The enzyme catalyses N(6)-carboxybiotinyl-L-lysyl-[protein] + acetyl-CoA = N(6)-biotinyl-L-lysyl-[protein] + malonyl-CoA. The protein operates within lipid metabolism; malonyl-CoA biosynthesis; malonyl-CoA from acetyl-CoA: step 1/1. In terms of biological role, component of the acetyl coenzyme A carboxylase (ACC) complex. Biotin carboxylase (BC) catalyzes the carboxylation of biotin on its carrier protein (BCCP) and then the CO(2) group is transferred by the transcarboxylase to acetyl-CoA to form malonyl-CoA. The sequence is that of Acetyl-coenzyme A carboxylase carboxyl transferase subunit beta 1 from Roseiflexus castenholzii (strain DSM 13941 / HLO8).